The sequence spans 278 residues: MASQIDQYAVFGNPINHSKSPFIHTLFARQTQQSMIYTAQCVPVDGFTEAAKHFFAQGGRGCNVTVPFKEEAYRFADRLTERARLAGAVNTLKKLDDGEILGDNTDGEGLVQDLLAQQVLLKGATILLIGAGGAARGVLKPLLDQQPASITVTNRTFAKAEQLAELVAAYGEVKAQAFEQLKQSYDVIINSTSASLDGELPAIDPVIFSSRSVCYDMMYGKGYTVFNQWARQHGCAQAIDGLGMLVGQAAESFMLWRGLRPGTKQILRELRKNLEGAL.

Shikimate is bound by residues 18–20 (SKS) and Thr65. Lys69 functions as the Proton acceptor in the catalytic mechanism. Glu81 is a binding site for NADP(+). Residues Asn90 and Asp106 each contribute to the shikimate site. NADP(+)-binding positions include 130 to 134 (GAGGA) and 154 to 159 (NRTFAK). Tyr223 is a binding site for shikimate. Residue Gly241 participates in NADP(+) binding.

It belongs to the shikimate dehydrogenase family. As to quaternary structure, homodimer.

It catalyses the reaction shikimate + NADP(+) = 3-dehydroshikimate + NADPH + H(+). It functions in the pathway metabolic intermediate biosynthesis; chorismate biosynthesis; chorismate from D-erythrose 4-phosphate and phosphoenolpyruvate: step 4/7. Involved in the biosynthesis of the chorismate, which leads to the biosynthesis of aromatic amino acids. Catalyzes the reversible NADPH linked reduction of 3-dehydroshikimate (DHSA) to yield shikimate (SA). This is Shikimate dehydrogenase (NADP(+)) from Vibrio cholerae serotype O1 (strain ATCC 39541 / Classical Ogawa 395 / O395).